The following is a 446-amino-acid chain: Endoplasmic reticulum membrane adapter protein XK (446 aa).

Topologically, residues 1–2 (MK) are cytoplasmic. A helical transmembrane segment spans residues 3-23 (FPASVIASVFLFVAETAAALY). Over 24–37 (LSSTYRSAGDRMWQ) the chain is Extracellular. A helical transmembrane segment spans residues 38 to 58 (VLTLLFSLMPCALVQFTLLFV). Over 59–68 (HRDLSRDRPL) the chain is Cytoplasmic. The chain crosses the membrane as a helical span at residues 69–89 (ALLMHLLQLGPLYRCCEVFCI). Over 90–140 (YCQSDQNEEPYVSITKKRQMPKDGLSEEVEKEVGQAEGKLITHRSAFSRAS) the chain is Extracellular. Residue Ser-115 is modified to Phosphoserine. Residues 141–161 (VIQAFLGSAPQLTLQLYITVL) traverse the membrane as a helical segment. Residues 162–171 (EQNITTGRCF) are Cytoplasmic-facing. A helical transmembrane segment spans residues 172–192 (IMTLSLLSIVYGALRCNILAI). At 193–208 (KIKYDEYEVKVKPLAY) the chain is on the extracellular side. A helical membrane pass occupies residues 209 to 229 (VCIFLWRSFEIATRVIVLVLF). Residues 230-235 (TSVLKI) are Cytoplasmic-facing. A helical membrane pass occupies residues 236-256 (WVVAVILVNFFSFFLYPWIVF). Topologically, residues 257–277 (WCSGSPFPENIEKALSRVGTT) are extracellular. Residues 278–298 (IVLCFLTLLYAGINMFCWSAV) traverse the membrane as a helical segment. Topologically, residues 299–317 (QLKIDNPELISKSQNWYRL) are cytoplasmic. A helical transmembrane segment spans residues 318–338 (LIYYMTRFIENSVLLLLWYFF). Residues 339 to 349 (KTDIYMYVCAP) lie on the Extracellular side of the membrane. Residues 350-370 (LLILQLLIGYCTGILFMLVFY) traverse the membrane as a helical segment. Residues 371–446 (QFFHPCKKLF…IWTAVDLCSA (76 aa)) lie on the Cytoplasmic side of the membrane.

The protein belongs to the XK family. As to quaternary structure, heterodimer with Kell; disulfide-linked. Interacts with VPS13A.

It localises to the endoplasmic reticulum membrane. In terms of biological role, recruits the lipid transfer protein VPS13A from lipid droplets to the endoplasmic reticulum (ER) membrane. This is Endoplasmic reticulum membrane adapter protein XK from Mus musculus (Mouse).